We begin with the raw amino-acid sequence, 585 residues long: Proline--tRNA ligase (585 aa).

The protein belongs to the class-II aminoacyl-tRNA synthetase family. ProS type 1 subfamily. In terms of assembly, homodimer.

It is found in the cytoplasm. The enzyme catalyses tRNA(Pro) + L-proline + ATP = L-prolyl-tRNA(Pro) + AMP + diphosphate. Catalyzes the attachment of proline to tRNA(Pro) in a two-step reaction: proline is first activated by ATP to form Pro-AMP and then transferred to the acceptor end of tRNA(Pro). As ProRS can inadvertently accommodate and process non-cognate amino acids such as alanine and cysteine, to avoid such errors it has two additional distinct editing activities against alanine. One activity is designated as 'pretransfer' editing and involves the tRNA(Pro)-independent hydrolysis of activated Ala-AMP. The other activity is designated 'posttransfer' editing and involves deacylation of mischarged Ala-tRNA(Pro). The misacylated Cys-tRNA(Pro) is not edited by ProRS. This is Proline--tRNA ligase from Acidobacterium capsulatum (strain ATCC 51196 / DSM 11244 / BCRC 80197 / JCM 7670 / NBRC 15755 / NCIMB 13165 / 161).